Here is a 277-residue protein sequence, read N- to C-terminus: Diaminopimelate epimerase (277 aa).

3 residues coordinate substrate: Asn13, Gln46, and Asn66. The active-site Proton donor is Cys75. Substrate contacts are provided by residues 76–77 (GN), Asn159, Asn192, and 210–211 (ER). The Proton acceptor role is filled by Cys219. 220 to 221 (GT) lines the substrate pocket.

Belongs to the diaminopimelate epimerase family. As to quaternary structure, homodimer.

The protein localises to the cytoplasm. It carries out the reaction (2S,6S)-2,6-diaminopimelate = meso-2,6-diaminopimelate. The protein operates within amino-acid biosynthesis; L-lysine biosynthesis via DAP pathway; DL-2,6-diaminopimelate from LL-2,6-diaminopimelate: step 1/1. Functionally, catalyzes the stereoinversion of LL-2,6-diaminopimelate (L,L-DAP) to meso-diaminopimelate (meso-DAP), a precursor of L-lysine and an essential component of the bacterial peptidoglycan. The protein is Diaminopimelate epimerase of Aromatoleum aromaticum (strain DSM 19018 / LMG 30748 / EbN1) (Azoarcus sp. (strain EbN1)).